Reading from the N-terminus, the 665-residue chain is Potassium-transporting ATPase ATP-binding subunit (665 aa).

The next 4 membrane-spanning stretches (helical) occupy residues 28-48 (MFLT…PGFF), 56-76 (YLQF…FSSM), 207-227 (IALT…TASI), and 244-264 (IVLL…AIGI). Residue D295 is the 4-aspartylphosphate intermediate of the active site. ATP contacts are provided by residues D332, E336, 364 to 371 (FSSETKYS), and K382. Mg(2+)-binding residues include D501 and D505. A run of 3 helical transmembrane segments spans residues 570 to 590 (YFVI…VNVL), 596 to 616 (IVAV…LIPL), and 644 to 664 (VVVP…LGVV).

It belongs to the cation transport ATPase (P-type) (TC 3.A.3) family. Type IA subfamily. In terms of assembly, the system is composed of three essential subunits: KdpA, KdpB and KdpC.

Its subcellular location is the cell membrane. The catalysed reaction is K(+)(out) + ATP + H2O = K(+)(in) + ADP + phosphate + H(+). Functionally, part of the high-affinity ATP-driven potassium transport (or Kdp) system, which catalyzes the hydrolysis of ATP coupled with the electrogenic transport of potassium into the cytoplasm. This subunit is responsible for energy coupling to the transport system and for the release of the potassium ions to the cytoplasm. In Thermoplasma acidophilum (strain ATCC 25905 / DSM 1728 / JCM 9062 / NBRC 15155 / AMRC-C165), this protein is Potassium-transporting ATPase ATP-binding subunit.